The following is a 348-amino-acid chain: D-alanine--D-alanine ligase (348 aa).

Residues 132-334 (KRILEVAGVP…YSDLIKELVV (203 aa)) enclose the ATP-grasp domain. Residue 162 to 217 (LEKLTFPVFVKPANMGSSVGISKAENESELRSAIDLALKYDSRILIEQGVVAREIE) coordinates ATP. Mg(2+) contacts are provided by D288, E301, and N303.

It belongs to the D-alanine--D-alanine ligase family. Mg(2+) is required as a cofactor. Requires Mn(2+) as cofactor.

Its subcellular location is the cytoplasm. It carries out the reaction 2 D-alanine + ATP = D-alanyl-D-alanine + ADP + phosphate + H(+). It functions in the pathway cell wall biogenesis; peptidoglycan biosynthesis. Cell wall formation. The sequence is that of D-alanine--D-alanine ligase from Streptococcus thermophilus (strain ATCC BAA-250 / LMG 18311).